The sequence spans 786 residues: Tyrosine-protein kinase Btk (786 aa).

The tract at residues 1–23 is disordered; sequence MMGTKHRNSHVNGSIKSSSSLRS. Residues 14–23 show a composition bias toward low complexity; it reads SIKSSSSLRS. Positions 41-184 constitute a PH domain; it reads DVVKSGSMVK…WIRAIRQVCE (144 aa). Residues 187 to 223 form a Btk-type zinc finger; sequence NTPKSYRYHPGLWSGKKWSCCKGLSRTTFGCRAAAHW. Residues His195, Cys206, Cys207, and Cys217 each coordinate Zn(2+). Over residues 226 to 240 the composition is skewed to low complexity; the sequence is ANNNPSNGSSPAQNS. The disordered stretch occupies residues 226 to 301; the sequence is ANNNPSNGSS…TPTSLQPQSS (76 aa). Positions 241–260 are enriched in polar residues; that stretch reads TRSISPNSSTTNSQFSLQHN. The span at 264-290 shows a compositional bias: gly residues; sequence SLGGGVGGGLGGGGSLGLGGGGGGGGS. The segment covering 291–301 has biased composition (polar residues); that stretch reads CTPTSLQPQSS. The region spanning 342–402 is the SH3 domain; that stretch reads HFVKLVVALY…PSNYVKPKAL (61 aa). An SH2 domain is found at 410–503; it reads WYVGDMSRQR…GLACRLKSSP (94 aa). The region spanning 526–779 is the Protein kinase domain; that stretch reads LMLMEELGSG…FRVLMDQLAL (254 aa). Residues 532–540 and Lys554 each bind ATP; that span reads LGSGQFGVV. Catalysis depends on Asp647, which acts as the Proton acceptor. Tyr677 bears the Phosphotyrosine; by autocatalysis mark.

The protein belongs to the protein kinase superfamily. Tyr protein kinase family. TEC subfamily. It depends on Zn(2+) as a cofactor. As to expression, ring canals in the egg chambers and imaginal disks of third-instar larvae.

The catalysed reaction is L-tyrosyl-[protein] + ATP = O-phospho-L-tyrosyl-[protein] + ADP + H(+). Its function is as follows. Required for proper ring canal development. Also required for the development of male genitalia and for adult survival. This is Tyrosine-protein kinase Btk from Drosophila melanogaster (Fruit fly).